The primary structure comprises 319 residues: ATP-dependent 6-phosphofructokinase (319 aa).

Gly-11 provides a ligand contact to ATP. 21-25 (RAVVR) provides a ligand contact to ADP. Residues 72 to 73 (RC) and 102 to 105 (GDGS) each bind ATP. Asp-103 contacts Mg(2+). 125–127 (TID) serves as a coordination point for substrate. Asp-127 serves as the catalytic Proton acceptor. Arg-154 is a binding site for ADP. Substrate is bound by residues Arg-162 and 169 to 171 (MGR). ADP is bound by residues 185 to 187 (GAE), Arg-211, and 213 to 215 (KKH). Residues Glu-222, Arg-243, and 249-252 (HIQR) each bind substrate.

The protein belongs to the phosphofructokinase type A (PFKA) family. ATP-dependent PFK group I subfamily. Prokaryotic clade 'B1' sub-subfamily. As to quaternary structure, homotetramer. It depends on Mg(2+) as a cofactor.

The protein resides in the cytoplasm. The enzyme catalyses beta-D-fructose 6-phosphate + ATP = beta-D-fructose 1,6-bisphosphate + ADP + H(+). It participates in carbohydrate degradation; glycolysis; D-glyceraldehyde 3-phosphate and glycerone phosphate from D-glucose: step 3/4. Allosterically activated by ADP and other diphosphonucleosides, and allosterically inhibited by phosphoenolpyruvate. Catalyzes the phosphorylation of D-fructose 6-phosphate to fructose 1,6-bisphosphate by ATP, the first committing step of glycolysis. The polypeptide is ATP-dependent 6-phosphofructokinase (Shouchella clausii (strain KSM-K16) (Alkalihalobacillus clausii)).